Here is a 908-residue protein sequence, read N- to C-terminus: Translation initiation factor IF-2 (908 aa).

2 disordered regions span residues 123 to 154 (EEPP…EELK) and 212 to 278 (KKEP…VSEK). The 171-residue stretch at 407 to 577 (ERAPIVTIMG…LFEAELLELK (171 aa)) folds into the tr-type G domain. Residues 416–423 (GHVDHGKT) are G1. 416 to 423 (GHVDHGKT) provides a ligand contact to GTP. The G2 stretch occupies residues 441 to 445 (GITQH). Positions 463 to 466 (DTPG) are G3. Residues 463-467 (DTPGH) and 517-520 (NKMD) each bind GTP. The segment at 517-520 (NKMD) is G4. Residues 553 to 555 (SAI) are G5.

The protein belongs to the TRAFAC class translation factor GTPase superfamily. Classic translation factor GTPase family. IF-2 subfamily.

The protein resides in the cytoplasm. Its function is as follows. One of the essential components for the initiation of protein synthesis. Protects formylmethionyl-tRNA from spontaneous hydrolysis and promotes its binding to the 30S ribosomal subunits. Also involved in the hydrolysis of GTP during the formation of the 70S ribosomal complex. In Amoebophilus asiaticus (strain 5a2), this protein is Translation initiation factor IF-2.